We begin with the raw amino-acid sequence, 369 residues long: Anhydro-N-acetylmuramic acid kinase (369 aa).

12–19 (GTSLDGVD) contacts ATP.

The protein belongs to the anhydro-N-acetylmuramic acid kinase family.

It carries out the reaction 1,6-anhydro-N-acetyl-beta-muramate + ATP + H2O = N-acetyl-D-muramate 6-phosphate + ADP + H(+). Its pathway is amino-sugar metabolism; 1,6-anhydro-N-acetylmuramate degradation. The protein operates within cell wall biogenesis; peptidoglycan recycling. In terms of biological role, catalyzes the specific phosphorylation of 1,6-anhydro-N-acetylmuramic acid (anhMurNAc) with the simultaneous cleavage of the 1,6-anhydro ring, generating MurNAc-6-P. Is required for the utilization of anhMurNAc either imported from the medium or derived from its own cell wall murein, and thus plays a role in cell wall recycling. This is Anhydro-N-acetylmuramic acid kinase from Escherichia coli O7:K1 (strain IAI39 / ExPEC).